We begin with the raw amino-acid sequence, 155 residues long: Ribonuclease H (155 aa).

The region spanning 1 to 142 is the RNase H type-1 domain; sequence MTKQVEIFTD…CDELARAAAM (142 aa). Residues D10, E48, D70, and D134 each coordinate Mg(2+).

This sequence belongs to the RNase H family. In terms of assembly, monomer. Mg(2+) is required as a cofactor.

The protein resides in the cytoplasm. It catalyses the reaction Endonucleolytic cleavage to 5'-phosphomonoester.. Endonuclease that specifically degrades the RNA of RNA-DNA hybrids. In Enterobacter sp. (strain 638), this protein is Ribonuclease H.